Here is a 449-residue protein sequence, read N- to C-terminus: Elongation factor 1-alpha (449 aa).

The region spanning 5–230 is the tr-type G domain; it reads KVHINIVVIG…DQIQEPKRPS (226 aa). The segment at 14–21 is G1; the sequence is GHVDSGKS. A GTP-binding site is contributed by 14 to 21; that stretch reads GHVDSGKS. Position 55 is an N6,N6-dimethyllysine (Lys-55). The tract at residues 70–74 is G2; the sequence is GITID. At Lys-79 the chain carries N6,N6,N6-trimethyllysine. The interval 91–94 is G3; the sequence is DAPG. Residues 91 to 95 and 153 to 156 contribute to the GTP site; these read DAPGH and NKMD. The interval 153-156 is G4; sequence NKMD. Position 187 is an N6,N6,N6-trimethyllysine (Lys-187). The tract at residues 194–196 is G5; sequence SGF. Residue Lys-261 is modified to N6-methyllysine. 5-glutamyl glycerylphosphorylethanolamine is present on Glu-289. N6,N6,N6-trimethyllysine is present on Lys-306. Glu-362 is subject to 5-glutamyl glycerylphosphorylethanolamine. N6,N6,N6-trimethyllysine is present on Lys-396.

This sequence belongs to the TRAFAC class translation factor GTPase superfamily. Classic translation factor GTPase family. EF-Tu/EF-1A subfamily.

The protein resides in the cytoplasm. Functionally, this protein promotes the GTP-dependent binding of aminoacyl-tRNA to the A-site of ribosomes during protein biosynthesis. In Manihot esculenta (Cassava), this protein is Elongation factor 1-alpha (EF1).